A 434-amino-acid polypeptide reads, in one-letter code: Nicotinate phosphoribosyltransferase (434 aa).

His242 is subject to Phosphohistidine; by autocatalysis.

Belongs to the NAPRTase family. In terms of processing, transiently phosphorylated on a His residue during the reaction cycle. Phosphorylation strongly increases the affinity for substrates and increases the rate of nicotinate D-ribonucleotide production. Dephosphorylation regenerates the low-affinity form of the enzyme, leading to product release.

The catalysed reaction is nicotinate + 5-phospho-alpha-D-ribose 1-diphosphate + ATP + H2O = nicotinate beta-D-ribonucleotide + ADP + phosphate + diphosphate. It participates in cofactor biosynthesis; NAD(+) biosynthesis; nicotinate D-ribonucleotide from nicotinate: step 1/1. Its function is as follows. Catalyzes the synthesis of beta-nicotinate D-ribonucleotide from nicotinate and 5-phospho-D-ribose 1-phosphate at the expense of ATP. The polypeptide is Nicotinate phosphoribosyltransferase (Chelativorans sp. (strain BNC1)).